The primary structure comprises 201 residues: Pyridoxal 5'-phosphate synthase subunit PdxT (201 aa).

49 to 51 (GES) contacts L-glutamine. C81 (nucleophile) is an active-site residue. Residues R110 and 139–140 (IR) contribute to the L-glutamine site. Residues H175 and E177 each act as charge relay system in the active site.

Belongs to the glutaminase PdxT/SNO family. In the presence of PdxS, forms a dodecamer of heterodimers. Only shows activity in the heterodimer.

The enzyme catalyses aldehydo-D-ribose 5-phosphate + D-glyceraldehyde 3-phosphate + L-glutamine = pyridoxal 5'-phosphate + L-glutamate + phosphate + 3 H2O + H(+). It carries out the reaction L-glutamine + H2O = L-glutamate + NH4(+). It functions in the pathway cofactor biosynthesis; pyridoxal 5'-phosphate biosynthesis. Catalyzes the hydrolysis of glutamine to glutamate and ammonia as part of the biosynthesis of pyridoxal 5'-phosphate. The resulting ammonia molecule is channeled to the active site of PdxS. This is Pyridoxal 5'-phosphate synthase subunit PdxT from Streptomyces avermitilis (strain ATCC 31267 / DSM 46492 / JCM 5070 / NBRC 14893 / NCIMB 12804 / NRRL 8165 / MA-4680).